The sequence spans 40 residues: uncharacterized protein (40 aa).

The signal sequence occupies residues 1–17; that stretch reads MAVAALAMYGGTCGACA.

This is an uncharacterized protein from Archaeoglobus fulgidus (strain ATCC 49558 / DSM 4304 / JCM 9628 / NBRC 100126 / VC-16).